Consider the following 436-residue polypeptide: Probable G-protein coupled receptor C06G4.5 (436 aa).

Residues 1–53 (MSTNLVDYVDDSYLNQSMNSENGLDSVTQIMYDMKKYNIVNDVLPPPNHEDLH) are Extracellular-facing. N15 carries N-linked (GlcNAc...) asparagine glycosylation. The helical transmembrane segment at 54–74 (VVIMAVSYLLLFLLGTCGNVA) threads the bilayer. Residues 75–94 (VLTTIYHVIRSSRATLDNTL) are Cytoplasmic-facing. A helical membrane pass occupies residues 95 to 115 (IYVIVLSCVDFGVCLSLPITV). The Extracellular segment spans residues 116–132 (IDQILGFWMFGKIPCKL). Residues 133-153 (HAVFENFGKILSALILTAMSF) traverse the membrane as a helical segment. Topologically, residues 154–171 (DRYAGVCHPQRKRLRSRN) are cytoplasmic. A helical membrane pass occupies residues 172 to 192 (FAITILLVLAVYAFITLCPLL). The Extracellular segment spans residues 193–230 (WSFTAREIILYAKETAPGMLTRMKIEKCTVDIDSQMFT). A helical membrane pass occupies residues 231–251 (AFTIYQFILCYCTPLVLIAFF). Residues 252–281 (YTKLLSKLREHTRTFKSSQIPFLHISLYTL) are Cytoplasmic-facing. A helical transmembrane segment spans residues 282 to 302 (AVACFYFLCWTPFWMATLFAV). The Extracellular portion of the chain corresponds to 303-316 (YLENSANSSSVPPV). An N-linked (GlcNAc...) asparagine glycan is attached at N309. A helical transmembrane segment spans residues 317–337 (FVYIMYFIHALPFTNSAINWI). The Cytoplasmic portion of the chain corresponds to 338–436 (LYGALNGQLQ…LLSNHNPTFL (99 aa)).

Belongs to the G-protein coupled receptor 1 family.

It localises to the cell membrane. In terms of biological role, putative receptor. This is Probable G-protein coupled receptor C06G4.5 from Caenorhabditis elegans.